The following is a 473-amino-acid chain: Serine/threonine-protein phosphatase 2A activator 1 (473 aa).

The tract at residues 360–473 (NAVPPPTSAH…HVPTKAPWAK (114 aa)) is disordered. Positions 368-378 (AHMSTTQSQSR) are enriched in polar residues. Positions 395-416 (APWATATQAAPPAGAGTAAPWA) are enriched in low complexity.

The protein belongs to the PTPA-type PPIase family.

The protein resides in the cytoplasm. Its subcellular location is the nucleus. The enzyme catalyses [protein]-peptidylproline (omega=180) = [protein]-peptidylproline (omega=0). PPIases accelerate the folding of proteins. It catalyzes the cis-trans isomerization of proline imidic peptide bonds in oligopeptides. Acts as a regulatory subunit for PP2A-like phosphatases modulating their activity or substrate specificity, probably by inducing a conformational change in the catalytic subunit, a direct target of the PPIase. Can reactivate inactive phosphatase PP2A-phosphatase methylesterase complexes (PP2Ai) in presence of ATP and Mg(2+) by dissociating the inactive form from the complex. The sequence is that of Serine/threonine-protein phosphatase 2A activator 1 (rrd1) from Aspergillus fumigatus (strain ATCC MYA-4609 / CBS 101355 / FGSC A1100 / Af293) (Neosartorya fumigata).